Reading from the N-terminus, the 258-residue chain is F-box/SPRY domain-containing protein 1 (258 aa).

An F-box domain is found at 6-54 (TEYAPDIPDNVLELIFSYLKLQDLRNCALVCKSWHRFLSDENNEVWRAQ). The B30.2/SPRY domain maps to 64–256 (FKTDLLSVVP…ISMVYLGPPL (193 aa)).

The protein belongs to the FBXO45/Fsn family. Component of an E3 ubiquitin ligase complex composed of hiw and Fsn.

The protein localises to the synapse. Its pathway is protein modification; protein ubiquitination. Required in the presynaptic motoneuron to down-regulate the levels of wnd and restrain synaptic terminal growth at the neuromuscular junction (NMJ). The protein is F-box/SPRY domain-containing protein 1 of Culex quinquefasciatus (Southern house mosquito).